A 126-amino-acid polypeptide reads, in one-letter code: Large ribosomal subunit protein bL12 (126 aa).

The protein belongs to the bacterial ribosomal protein bL12 family. Homodimer. Part of the ribosomal stalk of the 50S ribosomal subunit. Forms a multimeric L10(L12)X complex, where L10 forms an elongated spine to which 2 to 4 L12 dimers bind in a sequential fashion. Binds GTP-bound translation factors.

Functionally, forms part of the ribosomal stalk which helps the ribosome interact with GTP-bound translation factors. Is thus essential for accurate translation. The protein is Large ribosomal subunit protein bL12 of Bordetella petrii (strain ATCC BAA-461 / DSM 12804 / CCUG 43448).